Consider the following 629-residue polypeptide: Sushi domain-containing protein 5 (629 aa).

Residues 1–35 form the signal peptide; sequence MTAEGPSPPARWHRRLPGLWAAALLLLGLPRLSVR. Over 36 to 574 the chain is Extracellular; sequence ADGKFFVLES…DGCPGLSRGP (539 aa). Residues 39 to 134 enclose the Link domain; that stretch reads KFFVLESQNG…GGTYSALCIK (96 aa). Intrachain disulfides connect Cys61–Cys132, Cys140–Cys184, and Cys167–Cys197. The Sushi domain occupies 138–199; that stretch reads KPCGDPPSFP…WYGLVQACGK (62 aa). Over residues 225–249 the composition is skewed to basic and acidic residues; the sequence is EDSRTEADEDRGQGDSSEEAPKQDR. Disordered stretches follow at residues 225-252 and 344-403; these read EDSRTEADEDRGQGDSSEEAPKQDRLVS and DGPS…GLDE. A helical transmembrane segment spans residues 575–595; the sequence is VIATIVTVLCLLLLLAGVGMV. At 596-629 the chain is on the cytoplasmic side; that stretch reads WGYRKCQHKSSVYKLNVGQRQARHYHQQIEMEKV.

It localises to the membrane. This chain is Sushi domain-containing protein 5 (SUSD5), found in Homo sapiens (Human).